We begin with the raw amino-acid sequence, 383 residues long: Protein arginine N-methyltransferase PRMT10 (383 aa).

A disordered region spans residues 1–23; sequence MRSSQNGGAMGGRAAGTGGGGPS. Residues 8–22 are compositionally biased toward gly residues; it reads GAMGGRAAGTGGGGP. Residues 29 to 360 form the SAM-dependent MTase PRMT-type domain; that stretch reads EVDYAQYFCT…KENHRLMEIE (332 aa). Residues Gln45, Arg54, Gly78, Glu100, and Glu129 each contribute to the S-adenosyl-L-methionine site. Residues Glu143 and Glu152 contribute to the active site. The segment at 190 to 230 is dimerization arm; that stretch reads DRKRNDFDGAMADWHNFSDEIKSYYGVDMGVLTKPFAEEQE.

Belongs to the class I-like SAM-binding methyltransferase superfamily. Protein arginine N-methyltransferase family. Ring-like homodimer.

The catalysed reaction is L-arginyl-[protein] + 2 S-adenosyl-L-methionine = N(omega),N(omega)-dimethyl-L-arginyl-[protein] + 2 S-adenosyl-L-homocysteine + 2 H(+). Its function is as follows. Methylates (mono and asymmetric dimethylation) the guanidino nitrogens of arginyl residues in some proteins. Essential for regulating flowering time. The polypeptide is Protein arginine N-methyltransferase PRMT10 (PRMT10) (Arabidopsis thaliana (Mouse-ear cress)).